A 218-amino-acid polypeptide reads, in one-letter code: Adenylate kinase (218 aa).

10–15 lines the ATP pocket; the sequence is GAGKGT. The NMP stretch occupies residues 30 to 59; that stretch reads STGDMLRAAVKAGTPLGIAAKKIMDEGGLV. AMP-binding positions include T31, R36, 57–59, 85–88, and Q92; these read GLV and GFPR. Residues 122 to 159 are LID; it reads GRRVHPASGRTYHVKFNPPKVAGRDDVTGEELIQRDDD. ATP contacts are provided by residues R123 and 132–133; that span reads TY. AMP contacts are provided by R156 and R167. G203 provides a ligand contact to ATP.

It belongs to the adenylate kinase family. As to quaternary structure, monomer.

The protein resides in the cytoplasm. The catalysed reaction is AMP + ATP = 2 ADP. It participates in purine metabolism; AMP biosynthesis via salvage pathway; AMP from ADP: step 1/1. Functionally, catalyzes the reversible transfer of the terminal phosphate group between ATP and AMP. Plays an important role in cellular energy homeostasis and in adenine nucleotide metabolism. This is Adenylate kinase from Herminiimonas arsenicoxydans.